The primary structure comprises 74 residues: Small ribosomal subunit protein bS18 (74 aa).

This sequence belongs to the bacterial ribosomal protein bS18 family. Part of the 30S ribosomal subunit. Forms a tight heterodimer with protein bS6.

In terms of biological role, binds as a heterodimer with protein bS6 to the central domain of the 16S rRNA, where it helps stabilize the platform of the 30S subunit. The sequence is that of Small ribosomal subunit protein bS18 from Gloeobacter violaceus (strain ATCC 29082 / PCC 7421).